Here is a 428-residue protein sequence, read N- to C-terminus: 3-phosphoshikimate 1-carboxyvinyltransferase (428 aa).

3-phosphoshikimate is bound by residues Lys-19, Ser-20, and Arg-24. Lys-19 is a phosphoenolpyruvate binding site. Gly-91 and Arg-119 together coordinate phosphoenolpyruvate. The 3-phosphoshikimate site is built by Ser-164, Gln-166, Asp-312, and Lys-339. Residue Gln-166 coordinates phosphoenolpyruvate. Residue Asp-312 is the Proton acceptor of the active site. Arg-343 and Arg-386 together coordinate phosphoenolpyruvate.

This sequence belongs to the EPSP synthase family. Monomer.

The protein resides in the cytoplasm. It catalyses the reaction 3-phosphoshikimate + phosphoenolpyruvate = 5-O-(1-carboxyvinyl)-3-phosphoshikimate + phosphate. Its pathway is metabolic intermediate biosynthesis; chorismate biosynthesis; chorismate from D-erythrose 4-phosphate and phosphoenolpyruvate: step 6/7. Catalyzes the transfer of the enolpyruvyl moiety of phosphoenolpyruvate (PEP) to the 5-hydroxyl of shikimate-3-phosphate (S3P) to produce enolpyruvyl shikimate-3-phosphate and inorganic phosphate. This is 3-phosphoshikimate 1-carboxyvinyltransferase from Bacillus pumilus (strain SAFR-032).